A 263-amino-acid polypeptide reads, in one-letter code: Small ribosomal subunit protein eS1 (263 aa).

Residues 235–263 are disordered; it reads HGEGGGGKGEAGDKSERPEGYEPPVQESV. Over residues 244 to 254 the composition is skewed to basic and acidic residues; that stretch reads EAGDKSERPEG.

This sequence belongs to the eukaryotic ribosomal protein eS1 family. In terms of assembly, component of the small ribosomal subunit. Mature ribosomes consist of a small (40S) and a large (60S) subunit. The 40S subunit contains about 33 different proteins and 1 molecule of RNA (18S). The 60S subunit contains about 49 different proteins and 3 molecules of RNA (28S, 5.8S and 5S).

The protein resides in the cytoplasm. This is Small ribosomal subunit protein eS1 from Bombyx mori (Silk moth).